The sequence spans 613 residues: Zinc metalloproteinase-disintegrin-like EoVMP2 (613 aa).

The signal sequence occupies residues 1-20 (MMQVLLVTICLAVFPYQGSS). The propeptide occupies 21 to 194 (IILESGNVND…EASQLFATSE (174 aa)). Position 195 is a pyrrolidone carboxylic acid (glutamine 195). Residues 201–397 (RYIEFFIVVD…RNPKCMINKP (197 aa)) form the Peptidase M12B domain. Glutamate 204 contributes to the Ca(2+) binding site. The N-linked (GlcNAc...) asparagine glycan is linked to asparagine 219. Position 288 (aspartate 288) interacts with Ca(2+). Intrachain disulfides connect cysteine 312–cysteine 392, cysteine 352–cysteine 376, and cysteine 354–cysteine 359. Residue histidine 337 coordinates Zn(2+). Glutamate 338 is a catalytic residue. Zn(2+) is bound by residues histidine 341 and histidine 347. N-linked (GlcNAc...) asparagine glycosylation occurs at asparagine 375. Residues cysteine 392, asparagine 395, valine 407, asparagine 410, leucine 412, glutamate 414, glutamate 417, and aspartate 420 each coordinate Ca(2+). In terms of domain architecture, Disintegrin spans 405–491 (PPVCGNGLLE…DCPIDGFHAN (87 aa)). 14 disulfides stabilise this stretch: cysteine 408-cysteine 437, cysteine 419-cysteine 432, cysteine 421-cysteine 427, cysteine 431-cysteine 454, cysteine 445-cysteine 451, cysteine 450-cysteine 476, cysteine 463-cysteine 483, cysteine 470-cysteine 502, cysteine 495-cysteine 507, cysteine 514-cysteine 564, cysteine 529-cysteine 575, cysteine 542-cysteine 552, cysteine 559-cysteine 601, and cysteine 595-cysteine 606. Residues 469–471 (DCD) carry the D/ECD-tripeptide motif.

This sequence belongs to the venom metalloproteinase (M12B) family. P-III subfamily. P-IIIa sub-subfamily. In terms of assembly, monomer. The cofactor is Zn(2+). As to expression, expressed by the venom gland.

It is found in the secreted. Functionally, snake venom zinc metalloprotease that possesses high hemorrhagic activity. It inhibits collagen-induced platelet aggregation and activates prothrombin (F2). This Echis ocellatus (Ocellated saw-scaled viper) protein is Zinc metalloproteinase-disintegrin-like EoVMP2 (Svmp3-Eoc22).